Consider the following 347-residue polypeptide: MVRISLDVMGGDYGPEVVIPGAARALERHPDIKFVLFGQEARCAELLAKYPKLQASSTFHDCEIAVGMDEKPSQALRRGRGKSTMWKAIDAINADEADVVVSAGNTGALMAMSVFCLRTMQGIQRPAIAAIWPTLKGESIVLDVGATIGADAQQLMDFALMGGAMARALFEVERPSVGLLNVGVEEIKGQEEVKEAGRLIREANIEGIEYYGFVEGDDIGRGTVDVVVTEGFSGNIALKAAEGTARQIAEYLRSAMSRTLLAKIGYIFAKGAFDRLREKMDPRKVNGGVFLGLNGVVIKSHGGTDAEGFAAAIDVGYDMVKNGLKAKIEADLARYHGAEPTEALPPA.

This sequence belongs to the PlsX family. In terms of assembly, homodimer. Probably interacts with PlsY.

Its subcellular location is the cytoplasm. The enzyme catalyses a fatty acyl-[ACP] + phosphate = an acyl phosphate + holo-[ACP]. Its pathway is lipid metabolism; phospholipid metabolism. In terms of biological role, catalyzes the reversible formation of acyl-phosphate (acyl-PO(4)) from acyl-[acyl-carrier-protein] (acyl-ACP). This enzyme utilizes acyl-ACP as fatty acyl donor, but not acyl-CoA. The sequence is that of Phosphate acyltransferase from Sinorhizobium fredii (strain NBRC 101917 / NGR234).